The chain runs to 1050 residues: Inositol hexakisphosphate kinase 1 (1050 aa).

Disordered regions lie at residues 87-117, 129-177, 269-319, and 396-423; these read KITR…LSSS, PAIK…IQNV, RQEN…DNEH, and SDLD…NNND. Ser-150 carries the phosphoserine modification. Residues 156-173 are compositionally biased toward polar residues; the sequence is KQQSHQPQVLHHQTSLKP. Positions 290 to 306 are enriched in basic and acidic residues; sequence ESIKEKPNTFEQDKEGE. A compositionally biased stretch (acidic residues) spans 307-316; sequence QADEEEDEGD. Ser-396 carries the phosphoserine modification. A compositionally biased stretch (basic and acidic residues) spans 402 to 417; the sequence is NNGKNDTSNENKDIEV. A Phosphoserine modification is found at Ser-469. Positions 508-522 are enriched in low complexity; that stretch reads NDSYFSSSSSHNSCS. 2 disordered regions span residues 508–539 and 562–625; these read NDSY…DSGS and RKRN…PNLQ. Phosphoserine occurs at positions 537, 539, 566, 583, 589, 646, 664, and 670. The span at 566–624 shows a compositional bias: polar residues; sequence SNTTTMGNHNARLGSSPSFLTQKSRASSHDASNTSMKTLGDSSSQASLQMDDSKVNPNL. 772–780 lines the substrate pocket; that stretch reads PCALDLKMG.

It belongs to the inositol phosphokinase (IPK) family.

Its subcellular location is the cytoplasm. The catalysed reaction is 1D-myo-inositol hexakisphosphate + ATP = 5-diphospho-1D-myo-inositol 1,2,3,4,6-pentakisphosphate + ADP. The enzyme catalyses 1-diphospho-1D-myo-inositol 2,3,4,5,6-pentakisphosphate + ATP + H(+) = 1,5-bis(diphospho)-1D-myo-inositol 2,3,4,6-tetrakisphosphate + ADP. In terms of biological role, converts inositol hexakisphosphate (InsP6) to diphosphoinositol pentakisphosphate (InsP7/PP-InsP5). Involved in phosphate regulation and polyphosphate accumulation. Required for resistance to salt stress, cell wall integrity, vacuole morphogenesis, and telomere maintenance. The polypeptide is Inositol hexakisphosphate kinase 1 (KCS1) (Saccharomyces cerevisiae (strain ATCC 204508 / S288c) (Baker's yeast)).